Here is a 391-residue protein sequence, read N- to C-terminus: Testis-expressed protein 9 (391 aa).

Disordered regions lie at residues 1–31 (MAGRSLCLTRSSVPGTPFPPPVQQPSTPGPD) and 65–85 (QEVRSRPVSTQMKSCDDEDDY). Positions 188–351 (IGTEAQIRFL…EKQKGELMIG (164 aa)) form a coiled coil.

The protein localises to the cytoplasm. The protein resides in the cytoskeleton. It is found in the microtubule organizing center. It localises to the centrosome. Its subcellular location is the centriolar satellite. The polypeptide is Testis-expressed protein 9 (TEX9) (Homo sapiens (Human)).